The primary structure comprises 440 residues: Acetylornithine deacetylase (440 aa).

His101 contacts Zn(2+). Asp103 is an active-site residue. Position 133 (Asp133) interacts with Zn(2+). Catalysis depends on Glu167, which acts as the Proton acceptor. Residues Glu168 and His412 each contribute to the Zn(2+) site.

The protein belongs to the peptidase M20A family. ArgE subfamily. Homodimer. Zn(2+) serves as cofactor. It depends on Co(2+) as a cofactor.

The catalysed reaction is N(2)-acetyl-L-ornithine + H2O = L-ornithine + acetate. It participates in amino-acid biosynthesis; L-arginine biosynthesis; L-ornithine from N(2)-acetyl-L-ornithine (linear): step 1/1. The sequence is that of Acetylornithine deacetylase from Arabidopsis thaliana (Mouse-ear cress).